The sequence spans 67 residues: Large ribosomal subunit protein uL29 (67 aa).

Belongs to the universal ribosomal protein uL29 family.

The sequence is that of Large ribosomal subunit protein uL29 from Desulfitobacterium hafniense (strain DSM 10664 / DCB-2).